Consider the following 199-residue polypeptide: FMN-dependent NADH:quinone oxidoreductase (199 aa).

Residues Ser-9, 15–17 (SNS), and 95–98 (MYNF) each bind FMN.

This sequence belongs to the azoreductase type 1 family. In terms of assembly, homodimer. It depends on FMN as a cofactor.

The enzyme catalyses 2 a quinone + NADH + H(+) = 2 a 1,4-benzosemiquinone + NAD(+). The catalysed reaction is N,N-dimethyl-1,4-phenylenediamine + anthranilate + 2 NAD(+) = 2-(4-dimethylaminophenyl)diazenylbenzoate + 2 NADH + 2 H(+). Functionally, quinone reductase that provides resistance to thiol-specific stress caused by electrophilic quinones. In terms of biological role, also exhibits azoreductase activity. Catalyzes the reductive cleavage of the azo bond in aromatic azo compounds to the corresponding amines. The sequence is that of FMN-dependent NADH:quinone oxidoreductase from Aromatoleum aromaticum (strain DSM 19018 / LMG 30748 / EbN1) (Azoarcus sp. (strain EbN1)).